A 200-amino-acid chain; its full sequence is Glutathione peroxidase 1 (200 aa).

Ser-31 carries the post-translational modification Phosphoserine. The active site involves Sec-46. Position 46 (Sec-46) is a non-standard amino acid, selenocysteine. An N6-acetyllysine; alternate mark is found at Lys-85 and Lys-111. N6-succinyllysine; alternate is present on residues Lys-85 and Lys-111. Position 118 is an N6-acetyllysine (Lys-118). An N6-acetyllysine; alternate modification is found at Lys-145. Lys-145 is modified (N6-succinyllysine; alternate). Ser-194 is modified (phosphoserine).

This sequence belongs to the glutathione peroxidase family. As to quaternary structure, homotetramer. Interacts with MIEN1. During periods of oxidative stress, Sec-46 may react with a superoxide radical, irreversibly lose hydroselenide and be converted to dehydroalanine.

The protein localises to the cytoplasm. It localises to the mitochondrion. It carries out the reaction 2 glutathione + H2O2 = glutathione disulfide + 2 H2O. The catalysed reaction is a hydroperoxy polyunsaturated fatty acid + 2 glutathione = a hydroxy polyunsaturated fatty acid + glutathione disulfide + H2O. It catalyses the reaction tert-butyl hydroperoxide + 2 glutathione = tert-butanol + glutathione disulfide + H2O. The enzyme catalyses cumene hydroperoxide + 2 glutathione = 2-phenylpropan-2-ol + glutathione disulfide + H2O. It carries out the reaction (13S)-hydroperoxy-(9Z,11E)-octadecadienoate + 2 glutathione = (13S)-hydroxy-(9Z,11E)-octadecadienoate + glutathione disulfide + H2O. The catalysed reaction is (9S)-hydroperoxy-(10E,12Z)-octadecadienoate + 2 glutathione = (9S)-hydroxy-(10E,12Z)-octadecadienoate + glutathione disulfide + H2O. It catalyses the reaction (5S)-hydroperoxy-(6E,8Z,11Z,14Z)-eicosatetraenoate + 2 glutathione = (5S)-hydroxy-(6E,8Z,11Z,14Z)-eicosatetraenoate + glutathione disulfide + H2O. The enzyme catalyses (12S)-hydroperoxy-(5Z,8Z,10E,14Z)-eicosatetraenoate + 2 glutathione = (12S)-hydroxy-(5Z,8Z,10E,14Z)-eicosatetraenoate + glutathione disulfide + H2O. It carries out the reaction (12R)-hydroperoxy-(5Z,8Z,10E,14Z)-eicosatetraenoate + 2 glutathione = (12R)-hydroxy-(5Z,8Z,10E,14Z)-eicosatetraenoate + glutathione disulfide + H2O. The catalysed reaction is (15S)-hydroperoxy-(5Z,8Z,11Z,13E)-eicosatetraenoate + 2 glutathione = (15S)-hydroxy-(5Z,8Z,11Z,13E)-eicosatetraenoate + glutathione disulfide + H2O. It catalyses the reaction (5S)-hydroperoxy-(6E,8Z,11Z,14Z,17Z)-eicosapentaenoate + 2 glutathione = (5S)-hydroxy-(6E,8Z,11Z,14Z,17Z)-eicosapentaenoate + glutathione disulfide + H2O. The enzyme catalyses (12S)-hydroperoxy-(5Z,8Z,10E,14Z,17Z)-eicosapentaenoate + 2 glutathione = (12S)-hydroxy-(5Z,8Z,10E,14Z,17Z)-eicosapentaenoate + glutathione disulfide + H2O. It carries out the reaction (15S)-hydroperoxy-(5Z,8Z,11Z,13E,17Z)-eicosapentaenoate + 2 glutathione = (15S)-hydroxy-(5Z,8Z,11Z,13E,17Z)-eicosapentaenoate + glutathione disulfide + H2O. The catalysed reaction is (15S)-hydroperoxy-(11Z,13E)-eicosadienoate + 2 glutathione = (15S)-hydroxy-(11Z,13E)-eicosadienoate + glutathione disulfide + H2O. It catalyses the reaction (17S)-hydroperoxy-(4Z,7Z,10Z,13Z,15E,19Z)-docosahexaenoate + 2 glutathione = (17S)-hydroxy-(4Z,7Z,10Z,13Z,15E,19Z)-docosahexaenoate + glutathione disulfide + H2O. Functionally, catalyzes the reduction of hydroperoxides in a glutathione-dependent manner thus regulating cellular redox homeostasis. Can reduce small soluble hydroperoxides such as H2O2, cumene hydroperoxide and tert-butyl hydroperoxide, as well as several fatty acid-derived hydroperoxides. In platelets catalyzes the reduction of 12-hydroperoxyeicosatetraenoic acid, the primary product of the arachidonate 12-lipoxygenase pathway. This is Glutathione peroxidase 1 (GPX1) from Oryctolagus cuniculus (Rabbit).